Reading from the N-terminus, the 253-residue chain is Indole-3-glycerol phosphate synthase (253 aa).

The protein belongs to the TrpC family.

It catalyses the reaction 1-(2-carboxyphenylamino)-1-deoxy-D-ribulose 5-phosphate + H(+) = (1S,2R)-1-C-(indol-3-yl)glycerol 3-phosphate + CO2 + H2O. It participates in amino-acid biosynthesis; L-tryptophan biosynthesis; L-tryptophan from chorismate: step 4/5. This chain is Indole-3-glycerol phosphate synthase, found in Petrotoga mobilis (strain DSM 10674 / SJ95).